Here is a 216-residue protein sequence, read N- to C-terminus: 3-isopropylmalate dehydratase small subunit (216 aa).

The protein belongs to the LeuD family. LeuD type 1 subfamily. As to quaternary structure, heterodimer of LeuC and LeuD.

The catalysed reaction is (2R,3S)-3-isopropylmalate = (2S)-2-isopropylmalate. It participates in amino-acid biosynthesis; L-leucine biosynthesis; L-leucine from 3-methyl-2-oxobutanoate: step 2/4. Its function is as follows. Catalyzes the isomerization between 2-isopropylmalate and 3-isopropylmalate, via the formation of 2-isopropylmaleate. This Psychrobacter sp. (strain PRwf-1) protein is 3-isopropylmalate dehydratase small subunit.